Here is a 346-residue protein sequence, read N- to C-terminus: Guanine nucleotide-binding protein subunit beta-2 (346 aa).

WD repeat units follow at residues 57–96, 99–138, 147–185, 188–227, 230–269, 274–313, and 316–346; these read GHIN…KVQV, LRSA…ASGV, GYEG…KTMD, GHAG…HKQM, GHEM…QIAL, QKNT…HNGM, and GHEN…RLWL.

This sequence belongs to the WD repeat G protein beta family. G proteins are composed of 3 units, alpha, beta and gamma. Interacts with Ggammae/Guanine nucleotide-binding protein subunit gamma-e.

Functionally, guanine nucleotide-binding proteins (G proteins) are involved as modulators or transducers in various transmembrane signaling systems. The beta and gamma chains are required for the GTPase activity, for replacement of GDP by GTP, and for G protein-effector interaction. This is Guanine nucleotide-binding protein subunit beta-2 from Calliphora vicina (Blue blowfly).